Here is a 143-residue protein sequence, read N- to C-terminus: Submaxillary gland androgen-regulated protein 2, isoform gamma (143 aa).

Positions 1 to 22 (MKALYMVFVLWVLIGCFLSSEC) are cleaved as a signal peptide. A disordered region spans residues 28-50 (GQHDPTRPLSPSNPSSHFYPQPD). Over residues 36–45 (LSPSNPSSHF) the composition is skewed to polar residues.

The protein resides in the secreted. May play a role in protection or detoxification. The protein is Submaxillary gland androgen-regulated protein 2, isoform gamma (Smr2) of Mus musculus (Mouse).